Consider the following 83-residue polypeptide: Large ribosomal subunit protein bL31 (83 aa).

The protein belongs to the bacterial ribosomal protein bL31 family. Type A subfamily. In terms of assembly, part of the 50S ribosomal subunit.

Functionally, binds the 23S rRNA. The sequence is that of Large ribosomal subunit protein bL31 from Synechococcus sp. (strain CC9605).